The primary structure comprises 163 residues: Transcription antitermination protein NusB (163 aa).

This sequence belongs to the NusB family.

Involved in transcription antitermination. Required for transcription of ribosomal RNA (rRNA) genes. Binds specifically to the boxA antiterminator sequence of the ribosomal RNA (rrn) operons. In Granulibacter bethesdensis (strain ATCC BAA-1260 / CGDNIH1), this protein is Transcription antitermination protein NusB.